Reading from the N-terminus, the 940-residue chain is Serine/threonine-protein phosphatase 1 regulatory subunit 10 (940 aa).

An interaction with TOX4 region spans residues M1–D348. A TFIIS N-terminal domain is found at K73 to Q147. 4 disordered regions span residues Q147–T211, S247–P270, K304–T400, and Y533–D905. 2 stretches are compositionally biased toward basic and acidic residues: residues A153–S166 and P174–K196. A Glycyl lysine isopeptide (Lys-Gly) (interchain with G-Cter in SUMO2) cross-link involves residue K179. T256 is modified (phosphothreonine). K262 is covalently cross-linked (Glycyl lysine isopeptide (Lys-Gly) (interchain with G-Cter in SUMO2)). Phosphoserine is present on S313. The span at K325–S336 shows a compositional bias: low complexity. The segment at P357–A433 is necessary for interaction with PPP1CA. S382 is subject to Phosphoserine. A necessary for interaction with PPP1CC region spans residues G393 to R408. Residues R394–V423 carry the PP1-binding motif motif. S398 carries the post-translational modification Phosphoserine; by PKA. Positions T418–L619 are interaction with WDR82. 2 stretches are compositionally biased toward gly residues: residues G540–G551 and M565–I579. S545 carries the phosphoserine modification. A compositionally biased stretch (polar residues) spans E583–H595. The residue at position 591 (S591) is a Phosphoserine. Over residues P596 to K611 the composition is skewed to basic and acidic residues. Positions P644–H655 are enriched in pro residues. Residue R665 is modified to Omega-N-methylarginine. Over residues G676 to G690 the composition is skewed to low complexity. At R693 the chain carries Omega-N-methylarginine. Positions E714–F723 are enriched in pro residues. Gly residues-rich tracts occupy residues A726 to N764 and S790 to G845. Residue R739 is modified to Omega-N-methylarginine. 2 stretches are compositionally biased toward basic and acidic residues: residues P862 to P886 and R894 to G903. The segment at M906–V934 adopts a C3H1-type zinc-finger fold.

Component of the PNUTS-PP1 complex (also named PTW/PP1 complex), composed of PPP1R10/PNUTS, TOX4, WDR82, and PPP1CA (or PPP1CB or PPP1CC). Phosphorylated on Ser-398 by PKA within the region necessary for interaction with PPP1CA.

It is found in the nucleus. The protein resides in the chromosome. In terms of biological role, substrate-recognition component of the PNUTS-PP1 protein phosphatase complex, a protein phosphatase 1 (PP1) complex that promotes RNA polymerase II transcription pause-release, allowing transcription elongation. Promoter-proximal pausing by RNA polymerase II is a transcription halt following transcription initiation but prior to elongation, which acts as a checkpoint to control that transcripts are favorably configured for transcriptional elongation. The PNUTS-PP1 complex mediates the release of RNA polymerase II from promoter-proximal region of genes by catalyzing dephosphorylation of proteins involved in transcription, such as AFF4, CDK9, MEPCE, INTS12, NCBP1, POLR2M/GDOWN1 and SUPT6H. The PNUTS-PP1 complex also regulates RNA polymerase II transcription termination by mediating dephosphorylation of SUPT5H in termination zones downstream of poly(A) sites, thereby promoting deceleration of RNA polymerase II transcription. PNUTS-PP1 complex is also involved in the response to replication stress by mediating dephosphorylation of POLR2A at 'Ser-5' of the CTD, promoting RNA polymerase II degradation. The PNUTS-PP1 complex also plays a role in the control of chromatin structure and cell cycle progression during the transition from mitosis into interphase. PNUTS-PP1 complex mediates dephosphorylation of MYC, promoting MYC stability by preventing MYC ubiquitination by the SCF(FBXW7) complex. In addition to acts as a substrate-recognition component, PPP1R10/PNUTS also acts as a nuclear targeting subunit for the PNUTS-PP1 complex. In some context, PPP1R10/PNUTS also acts as an inhibitor of protein phosphatase 1 (PP1) activity by preventing access to substrates, such as RB. In Macaca mulatta (Rhesus macaque), this protein is Serine/threonine-protein phosphatase 1 regulatory subunit 10 (PPP1R10).